We begin with the raw amino-acid sequence, 527 residues long: MQKERVIMTNISTLNDVQKIIVLDYGSQYNQLIARRIREFGVFSELKSHKITADEVRAINPIGIILSGGPNSVYAEDAFGIDEEIFELGIPILGICYGMQLLTHKLGGKVVPAGEAGNREYGQSTLRLRAQSELFAGTPEEQVVLMSHGDAVTEIPEGFHLVADSVDCPFAAMEDTKKNFYGIQFHPEVRHTVYGNDILKNFAFSICGAKGDWSMANFVDMQIAQIRETVGDRKVLLGLSGGVDSSVVGVLLQKAIGDQLTCIFVDHGLLRKGEGDQVMEMLGGKFGLNIIRVDASKRFLDLLAGVDDPDKKRKIIGNEFVHVFDDEASKLKGVDFLAQGTLYTDIIESGTETAQTIKSHHNVGGLPEDMQFELIEPLNTLFKDEVRALGTELGMPDEVVWRQPFPGPGLAIRIMGEITEEKLETVRESDAILREEIAKAGLDRDVWQYFTVNTGVRSVGVMGDGRTYDYTIAIRAITSIDGMTADFAKLPWEVLQKISVRIVNEVDHVNRIVYDITSKPPATVEWE.

One can recognise a Glutamine amidotransferase type-1 domain in the interval 19-212; sequence KIIVLDYGSQ…AFSICGAKGD (194 aa). Cys96 serves as the catalytic Nucleophile. Residues His186 and Glu188 contribute to the active site. Residues 213 to 402 form the GMPS ATP-PPase domain; that stretch reads WSMANFVDMQ…LGMPDEVVWR (190 aa). Residue 240-246 participates in ATP binding; it reads SGGVDSS.

In terms of assembly, homodimer.

It catalyses the reaction XMP + L-glutamine + ATP + H2O = GMP + L-glutamate + AMP + diphosphate + 2 H(+). It participates in purine metabolism; GMP biosynthesis; GMP from XMP (L-Gln route): step 1/1. Its function is as follows. Catalyzes the synthesis of GMP from XMP. The protein is GMP synthase [glutamine-hydrolyzing] of Streptococcus thermophilus (strain CNRZ 1066).